The primary structure comprises 248 residues: Pyridoxine 5'-phosphate synthase (248 aa).

Residues Asn-8 and Arg-19 each contribute to the 3-amino-2-oxopropyl phosphate site. Residue His-44 is the Proton acceptor of the active site. Residues Arg-46 and His-51 each coordinate 1-deoxy-D-xylulose 5-phosphate. Glu-76 functions as the Proton acceptor in the catalytic mechanism. Thr-106 contributes to the 1-deoxy-D-xylulose 5-phosphate binding site. His-200 (proton donor) is an active-site residue. 3-amino-2-oxopropyl phosphate-binding positions include Asp-201 and Gly-223 to His-224.

It belongs to the PNP synthase family. In terms of assembly, homooctamer; tetramer of dimers.

It is found in the cytoplasm. The enzyme catalyses 3-amino-2-oxopropyl phosphate + 1-deoxy-D-xylulose 5-phosphate = pyridoxine 5'-phosphate + phosphate + 2 H2O + H(+). It participates in cofactor biosynthesis; pyridoxine 5'-phosphate biosynthesis; pyridoxine 5'-phosphate from D-erythrose 4-phosphate: step 5/5. Functionally, catalyzes the complicated ring closure reaction between the two acyclic compounds 1-deoxy-D-xylulose-5-phosphate (DXP) and 3-amino-2-oxopropyl phosphate (1-amino-acetone-3-phosphate or AAP) to form pyridoxine 5'-phosphate (PNP) and inorganic phosphate. In Chelativorans sp. (strain BNC1), this protein is Pyridoxine 5'-phosphate synthase.